We begin with the raw amino-acid sequence, 546 residues long: Arginine--tRNA ligase (546 aa).

The 'HIGH' region signature appears at Ala122–His132.

It belongs to the class-I aminoacyl-tRNA synthetase family. As to quaternary structure, monomer.

It is found in the cytoplasm. The catalysed reaction is tRNA(Arg) + L-arginine + ATP = L-arginyl-tRNA(Arg) + AMP + diphosphate. The chain is Arginine--tRNA ligase (argS) from Thermotoga maritima (strain ATCC 43589 / DSM 3109 / JCM 10099 / NBRC 100826 / MSB8).